The following is a 149-amino-acid chain: UPF0179 protein MM_0589 (149 aa).

This sequence belongs to the UPF0179 family.

The sequence is that of UPF0179 protein MM_0589 from Methanosarcina mazei (strain ATCC BAA-159 / DSM 3647 / Goe1 / Go1 / JCM 11833 / OCM 88) (Methanosarcina frisia).